A 34-amino-acid chain; its full sequence is Photosystem I reaction center subunit XII (34 aa).

The chain crosses the membrane as a helical span at residues 9–29 (LIILGLIVVMHAGVLALRLGI).

The protein belongs to the PsaM family.

The protein resides in the cellular thylakoid membrane. This Prochlorococcus marinus subsp. pastoris (strain CCMP1986 / NIES-2087 / MED4) protein is Photosystem I reaction center subunit XII.